A 475-amino-acid polypeptide reads, in one-letter code: Ribulose bisphosphate carboxylase large chain (475 aa).

Positions 1–2 are excised as a propeptide; sequence MS. At proline 3 the chain carries N-acetylproline. Lysine 14 is modified (N6,N6,N6-trimethyllysine). The substrate site is built by asparagine 123 and threonine 173. Lysine 175 serves as the catalytic Proton acceptor. Lysine 177 provides a ligand contact to substrate. Lysine 201, aspartate 203, and glutamate 204 together coordinate Mg(2+). Lysine 201 is subject to N6-carboxylysine. Residue histidine 294 is the Proton acceptor of the active site. Residues arginine 295, histidine 327, and serine 379 each coordinate substrate.

Belongs to the RuBisCO large chain family. Type I subfamily. As to quaternary structure, heterohexadecamer of 8 large chains and 8 small chains; disulfide-linked. The disulfide link is formed within the large subunit homodimers. Mg(2+) serves as cofactor. In terms of processing, the disulfide bond which can form in the large chain dimeric partners within the hexadecamer appears to be associated with oxidative stress and protein turnover.

The protein localises to the plastid. Its subcellular location is the chloroplast. The catalysed reaction is 2 (2R)-3-phosphoglycerate + 2 H(+) = D-ribulose 1,5-bisphosphate + CO2 + H2O. It carries out the reaction D-ribulose 1,5-bisphosphate + O2 = 2-phosphoglycolate + (2R)-3-phosphoglycerate + 2 H(+). RuBisCO catalyzes two reactions: the carboxylation of D-ribulose 1,5-bisphosphate, the primary event in carbon dioxide fixation, as well as the oxidative fragmentation of the pentose substrate in the photorespiration process. Both reactions occur simultaneously and in competition at the same active site. The polypeptide is Ribulose bisphosphate carboxylase large chain (Nandina domestica (Heavenly bamboo)).